Here is a 637-residue protein sequence, read N- to C-terminus: DNA mismatch repair protein MutL (637 aa).

2 disordered regions span residues 352 to 384 (DDFTSAKPSEDRGSTSSNEENEQRSSIDKNVLF) and 405 to 430 (ASVEPALEKEPPAAELTAGAKGAMEQ).

The protein belongs to the DNA mismatch repair MutL/HexB family.

This protein is involved in the repair of mismatches in DNA. It is required for dam-dependent methyl-directed DNA mismatch repair. May act as a 'molecular matchmaker', a protein that promotes the formation of a stable complex between two or more DNA-binding proteins in an ATP-dependent manner without itself being part of a final effector complex. The sequence is that of DNA mismatch repair protein MutL from Halalkalibacterium halodurans (strain ATCC BAA-125 / DSM 18197 / FERM 7344 / JCM 9153 / C-125) (Bacillus halodurans).